Consider the following 60-residue polypeptide: Cytotoxin 4 (60 aa).

4 disulfide bridges follow: Cys3-Cys21, Cys14-Cys38, Cys42-Cys53, and Cys54-Cys59.

This sequence belongs to the three-finger toxin family. Short-chain subfamily. Type IA cytotoxin sub-subfamily. Monomer in solution; Homodimer and oligomer in the presence of negatively charged lipids forming a pore with a size ranging between 20 and 30 Angstroms. As to expression, expressed by the venom gland.

The protein resides in the secreted. Its subcellular location is the target cell membrane. In terms of biological role, shows cytolytic activity on many different cells by forming pore in lipid membranes. In vivo, increases heart rate or kills the animal by cardiac arrest. In addition, it binds to heparin with high affinity, interacts with Kv channel-interacting protein 1 (KCNIP1) in a calcium-independent manner, and binds to integrin alpha-V/beta-3 (ITGAV/ITGB3) with moderate affinity. This chain is Cytotoxin 4, found in Naja annulifera (Banded Egyptian cobra).